A 418-amino-acid chain; its full sequence is Tyrosine--tRNA ligase (418 aa).

Tyrosine 34 provides a ligand contact to L-tyrosine. Positions 39–48 (PTADSLHLGH) match the 'HIGH' region motif. The L-tyrosine site is built by tyrosine 169 and glutamine 173. Positions 229-233 (KFGKS) match the 'KMSKS' region motif. Lysine 232 is an ATP binding site. Positions 352 to 418 (NNIVELLVSS…GKKKYFVLTY (67 aa)) constitute an S4 RNA-binding domain.

This sequence belongs to the class-I aminoacyl-tRNA synthetase family. TyrS type 1 subfamily. In terms of assembly, homodimer.

The protein resides in the cytoplasm. It catalyses the reaction tRNA(Tyr) + L-tyrosine + ATP = L-tyrosyl-tRNA(Tyr) + AMP + diphosphate + H(+). Functionally, catalyzes the attachment of tyrosine to tRNA(Tyr) in a two-step reaction: tyrosine is first activated by ATP to form Tyr-AMP and then transferred to the acceptor end of tRNA(Tyr). The sequence is that of Tyrosine--tRNA ligase from Streptococcus pneumoniae (strain ATCC BAA-255 / R6).